A 721-amino-acid polypeptide reads, in one-letter code: Oviduct-specific glycoprotein (721 aa).

A signal peptide spans 1 to 21 (MGRLLLLAGLVLLMKHSDGTA). A GH18 domain is found at 22-385 (YKLVCYFTNW…HILNELLVQT (364 aa)). A disulfide bond links Cys26 and Cys51. Chitin contacts are provided by residues 71–72 (LQ), 98–101 (GGWN), Tyr142, 211–214 (LSYD), and Trp355. 2 N-linked (GlcNAc...) asparagine glycosylation sites follow: Asn402 and Asn442. Residues 444–456 (TTVPSDGSVTPGG) are compositionally biased toward polar residues. A disordered region spans residues 444 to 465 (TTVPSDGSVTPGGTASPRKHAV). A glycan (N-linked (GlcNAc...) asparagine) is linked at Asn469. A run of 21 repeats spans residues 486 to 492 (SKTTTGV), 493 to 499 (SKTTTGI), 500 to 506 (SKTTTGV), 507 to 513 (SKTTTGV), 514 to 520 (SKATAGI), 521 to 527 (SKTIPEI), 528 to 534 (SKATAGV), 535 to 541 (SKTTTGV), 542 to 548 (SKTTTGI), 549 to 555 (SKTITGV), 556 to 562 (SKTTTGI), 563 to 569 (SKTTTGI), 570 to 576 (SKTTTGV), 577 to 583 (SKITTGV), 584 to 590 (SKTTTGI), 591 to 597 (SKTTTGI), 598 to 604 (SQTTTGI), 605 to 611 (SKTTTDI), 612 to 618 (SKTTTGI), 619 to 625 (SKTTPGI), and 626 to 632 (SKTTPGM). The interval 486–632 (SKTTTGVSKT…PGISKTTPGM (147 aa)) is 21 X 7 AA tandem repeats of S-K-[TAI]-[TI]-[TAP]-[GED]-[IVM].

The protein belongs to the glycosyl hydrolase 18 family. Epithelial cells of the oviduct.

It is found in the cytoplasmic vesicle. The protein localises to the secretory vesicle. Its function is as follows. Binds to oocyte zona pellucida in vivo. May play a role in the fertilization process and/or early embryonic development. The polypeptide is Oviduct-specific glycoprotein (Ovgp1) (Mus musculus (Mouse)).